The sequence spans 614 residues: ATP-dependent zinc metalloprotease FtsH (614 aa).

The Stromal portion of the chain corresponds to 1-7 (MKKQWKK). The helical transmembrane segment at 8-28 (IVLFVLPVIITLITLSSFLFY) threads the bilayer. Over 29 to 116 (NQDVVHNWSS…AHPSSSNVNL (88 aa)) the chain is Lumenal. A helical membrane pass occupies residues 117 to 137 (VSWLSNLLLPLILIITLFFFF). Residues 138–614 (RRGNKSSSGP…EFMRIVEERV (477 aa)) lie on the Stromal side of the membrane. 211 to 218 (GPPGTGKT) is an ATP binding site. His432 contributes to the Zn(2+) binding site. Glu433 is an active-site residue. Zn(2+) is bound by residues His436 and Asp510.

It in the central section; belongs to the AAA ATPase family. This sequence in the C-terminal section; belongs to the peptidase M41 family. In terms of assembly, homohexamer. The cofactor is Zn(2+).

The protein localises to the plastid. It localises to the chloroplast thylakoid membrane. Functionally, acts as a processive, ATP-dependent zinc metallopeptidase. This chain is ATP-dependent zinc metalloprotease FtsH, found in Cyanidium caldarium (Red alga).